The sequence spans 385 residues: Succinate--CoA ligase [ADP-forming] subunit beta (385 aa).

The ATP-grasp domain occupies 9 to 244 (KEVLRKYGVS…LDEEDPKEIE (236 aa)). ATP contacts are provided by residues lysine 46, 53 to 55 (GRG), glutamate 99, cysteine 102, and glutamate 107. Mg(2+) contacts are provided by asparagine 199 and aspartate 213. Residues asparagine 264 and 321–323 (GIM) contribute to the substrate site.

It belongs to the succinate/malate CoA ligase beta subunit family. In terms of assembly, heterotetramer of two alpha and two beta subunits. Mg(2+) serves as cofactor.

It catalyses the reaction succinate + ATP + CoA = succinyl-CoA + ADP + phosphate. The catalysed reaction is GTP + succinate + CoA = succinyl-CoA + GDP + phosphate. It functions in the pathway carbohydrate metabolism; tricarboxylic acid cycle; succinate from succinyl-CoA (ligase route): step 1/1. Succinyl-CoA synthetase functions in the citric acid cycle (TCA), coupling the hydrolysis of succinyl-CoA to the synthesis of either ATP or GTP and thus represents the only step of substrate-level phosphorylation in the TCA. The beta subunit provides nucleotide specificity of the enzyme and binds the substrate succinate, while the binding sites for coenzyme A and phosphate are found in the alpha subunit. The polypeptide is Succinate--CoA ligase [ADP-forming] subunit beta (Bacillus velezensis (strain DSM 23117 / BGSC 10A6 / LMG 26770 / FZB42) (Bacillus amyloliquefaciens subsp. plantarum)).